The primary structure comprises 862 residues: Leucine--tRNA ligase (862 aa).

The short motif at 42–52 is the 'HIGH' region element; the sequence is PYPSGRLHMGH. Residues 622 to 626 carry the 'KMSKS' region motif; that stretch reads KMSKS. Lys-625 contacts ATP.

Belongs to the class-I aminoacyl-tRNA synthetase family.

The protein resides in the cytoplasm. It carries out the reaction tRNA(Leu) + L-leucine + ATP = L-leucyl-tRNA(Leu) + AMP + diphosphate. This chain is Leucine--tRNA ligase, found in Vibrio campbellii (strain ATCC BAA-1116).